A 995-amino-acid polypeptide reads, in one-letter code: Putative pentatricopeptide repeat-containing protein At5g09950 (995 aa).

22 PPR repeats span residues 35 to 65, 66 to 100, 101 to 137, 138 to 169, 170 to 204, 205 to 241, 242 to 276, 278 to 303, 307 to 342, 348 to 378, 379 to 413, 414 to 448, 449 to 483, 484 to 515, 516 to 550, 551 to 581, 583 to 617, 618 to 652, 653 to 683, 684 to 718, 720 to 750, and 756 to 786; these read DVYL…MPLR, NCVS…GIFS, NQYA…SYAV, DAVV…IEVK, NSVS…GSRP, TEYT…GLLT, DLFV…NAVT, NGLM…MNSM, SPES…VITT, MVGI…MTDK, DSVS…DILP, GSFT…GIDL, NVSV…DQVS, WNSI…GQKL, NRIT…NIAD, EATT…MAER, DNVT…GQRL, DSFM…CLES, DVVV…MPVR, NSYS…GQTP, DHVT…MSDS, and RIEH…MPMK. Residues 791 to 868 are type E motif; the sequence is IWRTVLGACC…EAGYSWVTMK (78 aa). Residues 869–899 form a type E(+) motif region; that stretch reads DGVHMFVAGDKSHPDADVIYKKLKELNRKMR. A type DYW motif region spans residues 900–995; sequence DAGYVPQTGF…DGACSCSDFW (96 aa).

The protein belongs to the PPR family. PCMP-H subfamily.

This Arabidopsis thaliana (Mouse-ear cress) protein is Putative pentatricopeptide repeat-containing protein At5g09950 (PCMP-H35).